The following is a 192-amino-acid chain: Ribosomal RNA small subunit methyltransferase G (192 aa).

Residues Gly-63, Leu-68, 112–113 (IE), and Arg-125 contribute to the S-adenosyl-L-methionine site.

The protein belongs to the methyltransferase superfamily. RNA methyltransferase RsmG family.

It is found in the cytoplasm. It carries out the reaction guanosine(527) in 16S rRNA + S-adenosyl-L-methionine = N(7)-methylguanosine(527) in 16S rRNA + S-adenosyl-L-homocysteine. Functionally, specifically methylates the N7 position of guanine in position 527 of 16S rRNA. This Rickettsia africae (strain ESF-5) protein is Ribosomal RNA small subunit methyltransferase G.